We begin with the raw amino-acid sequence, 710 residues long: Prolyl endopeptidase (710 aa).

The residue at position 1 (M1) is an N-acetylmethionine. The residue at position 157 (K157) is an N6-acetyllysine. Active-site charge relay system residues include S554, D641, and H680.

Belongs to the peptidase S9A family.

It localises to the cytoplasm. It carries out the reaction Hydrolysis of Pro-|-Xaa &gt;&gt; Ala-|-Xaa in oligopeptides.. In terms of biological role, cleaves peptide bonds on the C-terminal side of prolyl residues within peptides that are up to approximately 30 amino acids long. The protein is Prolyl endopeptidase (Prep) of Mus musculus (Mouse).